Consider the following 199-residue polypeptide: Ribosome maturation factor RimM (199 aa).

The 77-residue stretch at 93-169 folds into the PRC barrel domain; it reads DDEYYHADLI…IELPDEIDGE (77 aa). The segment at 164-199 is disordered; sequence DEIDGEDRASADESASAEDDAAAPNSARHPRESGDP.

The protein belongs to the RimM family. As to quaternary structure, binds ribosomal protein uS19.

It localises to the cytoplasm. In terms of biological role, an accessory protein needed during the final step in the assembly of 30S ribosomal subunit, possibly for assembly of the head region. Essential for efficient processing of 16S rRNA. May be needed both before and after RbfA during the maturation of 16S rRNA. It has affinity for free ribosomal 30S subunits but not for 70S ribosomes. This chain is Ribosome maturation factor RimM, found in Bradyrhizobium sp. (strain ORS 278).